Consider the following 249-residue polypeptide: Protein-lysine 6-oxidase (249 aa).

Residue tyrosine 19 is modified to Sulfotyrosine. The lysyl-oxidase like stretch occupies residues 45 to 249; the sequence is PDLVPDPYYI…YASGCTISPY (205 aa). Disulfide bonds link cysteine 70-cysteine 76, cysteine 123-cysteine 172, cysteine 156-cysteine 162, cysteine 183-cysteine 193, and cysteine 230-cysteine 244. Cu cation is bound by residues histidine 124, histidine 126, and histidine 128. The lysine tyrosylquinone (Lys-Tyr) cross-link spans 152–187; the sequence is KASFCLEDTSCDYGYHRRFACTAHTQGLSPGCYDTY. At tyrosine 187 the chain carries 2',4',5'-topaquinone.

Belongs to the lysyl oxidase family. Interacts with MFAP4. Interacts (via propeptide) with EFEMP2; this interaction is strong and facilitates formation of ternary complexes with ELN during elastic fiber assembly; this interaction limits interaction of EFEMP2 with FBLN5. It depends on Cu cation as a cofactor. The cofactor is lysine tyrosylquinone residue. In terms of processing, the lysine tyrosylquinone cross-link (LTQ) is generated by condensation of the epsilon-amino group of a lysine with a topaquinone produced by oxidation of tyrosine. Post-translationally, proteolytically cleaved by BMP1 which removes the propeptide. Also proteolytically cleaved by ADAMTS2 and ADAMTS14, but not by ADAMTS3, at an additional cleavage site downstream of the BMP1 cleavage site. The propeptide plays a role in directing the deposition of this enzyme to elastic fibers, via interaction with tropoelastin. Cleavage by BMP1 to remove the propeptide does not increase enzymatic activity but increases binding to collagen. Cleavage by ADAMTS2 produces a form with reduced collagen-binding activity. Sulfated at Tyr-19 and also at either Tyr-15 or Tyr-16 which enhances binding to collagen.

The protein localises to the secreted. It is found in the extracellular space. The enzyme catalyses L-lysyl-[protein] + O2 + H2O = (S)-2-amino-6-oxohexanoyl-[protein] + H2O2 + NH4(+). Responsible for the post-translational oxidative deamination of peptidyl lysine residues in precursors to fibrous collagen and elastin. Regulator of Ras expression. May play a role in tumor suppression. Plays a role in the aortic wall architecture. This is Protein-lysine 6-oxidase from Sus scrofa (Pig).